Consider the following 445-residue polypeptide: NAD-specific glutamate dehydrogenase (445 aa).

K124 is a catalytic residue.

The protein belongs to the Glu/Leu/Phe/Val dehydrogenases family. In terms of assembly, homohexamer.

Its subcellular location is the cell surface. It carries out the reaction L-glutamate + NAD(+) + H2O = 2-oxoglutarate + NH4(+) + NADH + H(+). Probably involved in degradation rather than biosynthesis of glutamate. This chain is NAD-specific glutamate dehydrogenase (gdh), found in Porphyromonas gingivalis (strain ATCC 33277 / DSM 20709 / CIP 103683 / JCM 12257 / NCTC 11834 / 2561).